Here is a 453-residue protein sequence, read N- to C-terminus: Glucose N-acetyltransferase 1-B (453 aa).

Topologically, residues 1–8 (MLKRKVRY) are cytoplasmic. Residues 9–29 (LLLIVVVFTGIILSVEAIMRF) traverse the membrane as a helical; Signal-anchor for type II membrane protein segment. The Lumenal portion of the chain corresponds to 30-453 (QLNKNVDYYL…LESRAICQVN (424 aa)). N-linked (GlcNAc...) asparagine glycosylation is found at Asn108, Asn126, and Asn176. The short motif at 187–189 (DND) is the DXD element.

The protein belongs to the GNT1 family.

The protein resides in the golgi apparatus membrane. The protein localises to the vacuole membrane. In terms of biological role, N-acetylglucosaminyltransferase involved in the Golgi-specific modification of N-linked glycans. The protein is Glucose N-acetyltransferase 1-B (GNT1-B) of Kluyveromyces lactis (strain ATCC 8585 / CBS 2359 / DSM 70799 / NBRC 1267 / NRRL Y-1140 / WM37) (Yeast).